The following is a 392-amino-acid chain: ATP phosphoribosyltransferase regulatory subunit (392 aa).

It belongs to the class-II aminoacyl-tRNA synthetase family. HisZ subfamily. In terms of assembly, heteromultimer composed of HisG and HisZ subunits.

The protein resides in the cytoplasm. It participates in amino-acid biosynthesis; L-histidine biosynthesis; L-histidine from 5-phospho-alpha-D-ribose 1-diphosphate: step 1/9. Required for the first step of histidine biosynthesis. May allow the feedback regulation of ATP phosphoribosyltransferase activity by histidine. In Geobacillus sp. (strain WCH70), this protein is ATP phosphoribosyltransferase regulatory subunit.